The chain runs to 504 residues: Probable alpha-L-arabinofuranosidase C (504 aa).

3 N-linked (GlcNAc...) asparagine glycosylation sites follow: Asn152, Asn181, and Asn269.

It belongs to the glycosyl hydrolase 51 family.

Its subcellular location is the secreted. The catalysed reaction is Hydrolysis of terminal non-reducing alpha-L-arabinofuranoside residues in alpha-L-arabinosides.. It functions in the pathway glycan metabolism; L-arabinan degradation. Its function is as follows. Alpha-L-arabinofuranosidase involved in the degradation of arabinoxylan, a major component of plant hemicellulose. Acts only on small linear 1,5-alpha-linked L-arabinofuranosyl oligosaccharides. The sequence is that of Probable alpha-L-arabinofuranosidase C (abfC) from Aspergillus flavus (strain ATCC 200026 / FGSC A1120 / IAM 13836 / NRRL 3357 / JCM 12722 / SRRC 167).